The following is a 300-amino-acid chain: 4-diphosphocytidyl-2-C-methyl-D-erythritol kinase (300 aa).

K17 is a catalytic residue. An ATP-binding site is contributed by 102–112 (PVAAGIGGGSA). The active site involves D144.

The protein belongs to the GHMP kinase family. IspE subfamily.

The enzyme catalyses 4-CDP-2-C-methyl-D-erythritol + ATP = 4-CDP-2-C-methyl-D-erythritol 2-phosphate + ADP + H(+). Its pathway is isoprenoid biosynthesis; isopentenyl diphosphate biosynthesis via DXP pathway; isopentenyl diphosphate from 1-deoxy-D-xylulose 5-phosphate: step 3/6. In terms of biological role, catalyzes the phosphorylation of the position 2 hydroxy group of 4-diphosphocytidyl-2C-methyl-D-erythritol. The polypeptide is 4-diphosphocytidyl-2-C-methyl-D-erythritol kinase (Bradyrhizobium sp. (strain ORS 278)).